The sequence spans 334 residues: Tryptophan--tRNA ligase (334 aa).

ATP contacts are provided by residues 11–13 (QPS) and 19–20 (GN). A 'HIGH' region motif is present at residues 12–20 (PSGELTIGN). Residue Asp-135 participates in L-tryptophan binding. ATP contacts are provided by residues 147–149 (GED), Val-186, and 195–199 (KMSKS). The 'KMSKS' region motif lies at 195-199 (KMSKS).

This sequence belongs to the class-I aminoacyl-tRNA synthetase family. As to quaternary structure, homodimer.

It localises to the cytoplasm. It catalyses the reaction tRNA(Trp) + L-tryptophan + ATP = L-tryptophyl-tRNA(Trp) + AMP + diphosphate + H(+). In terms of biological role, catalyzes the attachment of tryptophan to tRNA(Trp). This is Tryptophan--tRNA ligase from Salmonella typhi.